A 176-amino-acid chain; its full sequence is Inorganic pyrophosphatase (176 aa).

Substrate is bound by residues Lys-30, Arg-44, and Tyr-56. 3 residues coordinate Mg(2+): Asp-66, Asp-71, and Asp-103. A substrate-binding site is contributed by Tyr-142.

Belongs to the PPase family. Homohexamer. Mg(2+) is required as a cofactor.

Its subcellular location is the cytoplasm. It carries out the reaction diphosphate + H2O = 2 phosphate + H(+). Functionally, catalyzes the hydrolysis of inorganic pyrophosphate (PPi) forming two phosphate ions. This chain is Inorganic pyrophosphatase, found in Vibrio parahaemolyticus serotype O3:K6 (strain RIMD 2210633).